The primary structure comprises 198 residues: Ribonuclease HII (198 aa).

In terms of domain architecture, RNase H type-2 spans 10 to 198; the sequence is HLVAGVDEVG…PVRRALGIAS (189 aa). 3 residues coordinate a divalent metal cation: D16, E17, and D108.

This sequence belongs to the RNase HII family. The cofactor is Mn(2+). It depends on Mg(2+) as a cofactor.

The protein localises to the cytoplasm. It catalyses the reaction Endonucleolytic cleavage to 5'-phosphomonoester.. Functionally, endonuclease that specifically degrades the RNA of RNA-DNA hybrids. This chain is Ribonuclease HII, found in Cronobacter sakazakii (strain ATCC BAA-894) (Enterobacter sakazakii).